A 271-amino-acid polypeptide reads, in one-letter code: Formamidopyrimidine-DNA glycosylase (271 aa).

Catalysis depends on Pro-2, which acts as the Schiff-base intermediate with DNA. Glu-3 acts as the Proton donor in catalysis. Residue Lys-58 is the Proton donor; for beta-elimination activity of the active site. DNA contacts are provided by His-91, Arg-110, and Arg-152. The FPG-type zinc-finger motif lies at 237–271 (SVYGRNDAPCPGCGAPIRRSRQGGRSTYFCDRCQH). The active-site Proton donor; for delta-elimination activity is the Arg-261.

The protein belongs to the FPG family. As to quaternary structure, monomer. Requires Zn(2+) as cofactor.

It carries out the reaction Hydrolysis of DNA containing ring-opened 7-methylguanine residues, releasing 2,6-diamino-4-hydroxy-5-(N-methyl)formamidopyrimidine.. The enzyme catalyses 2'-deoxyribonucleotide-(2'-deoxyribose 5'-phosphate)-2'-deoxyribonucleotide-DNA = a 3'-end 2'-deoxyribonucleotide-(2,3-dehydro-2,3-deoxyribose 5'-phosphate)-DNA + a 5'-end 5'-phospho-2'-deoxyribonucleoside-DNA + H(+). Involved in base excision repair of DNA damaged by oxidation or by mutagenic agents. Acts as a DNA glycosylase that recognizes and removes damaged bases. Has a preference for oxidized purines, such as 7,8-dihydro-8-oxoguanine (8-oxoG). Has AP (apurinic/apyrimidinic) lyase activity and introduces nicks in the DNA strand. Cleaves the DNA backbone by beta-delta elimination to generate a single-strand break at the site of the removed base with both 3'- and 5'-phosphates. This is Formamidopyrimidine-DNA glycosylase from Geotalea uraniireducens (strain Rf4) (Geobacter uraniireducens).